Consider the following 317-residue polypeptide: MYDWLNALPKAELHLHLEGSLEPELLFALAERNRIALPWDDVETLRKAYAFNNLQEFLDLYYRGADVLRTEQDFYDLTWAYLLRCKAQNVVHTEPFFDPQTHTDRGIPFEVVLAGITGALKDGKSKLGVDSGLILSFLRHLSQEEAEKTLDQALPFRDAFVAVGLDSSEMGHPPSKFQRVFDRARNEGFLTVAHAGEEGPPEYIWEALDLLKIQRIDHGVRAIEDERLMQRIIDEQIPLTVCPLSNTKLCVFDDMAQHNILDMLERGVKVTVNSDDPAYFGGYVTENFHALYTHLGMTEDQAKRLAQNSLDARLVKP.

Zn(2+)-binding residues include histidine 14, histidine 16, and histidine 194. Glutamate 197 serves as the catalytic Proton donor. Aspartate 275 is a Zn(2+) binding site. Aspartate 276 lines the substrate pocket.

Belongs to the metallo-dependent hydrolases superfamily. Adenosine and AMP deaminases family. Adenine deaminase type 2 subfamily. Requires Zn(2+) as cofactor.

It carries out the reaction adenine + H2O + H(+) = hypoxanthine + NH4(+). Its function is as follows. Catalyzes the hydrolytic deamination of adenine to hypoxanthine. Plays an important role in the purine salvage pathway and in nitrogen catabolism. This Pseudomonas syringae pv. syringae (strain B728a) protein is Adenine deaminase.